The chain runs to 183 residues: A-type ATP synthase subunit E (183 aa).

The protein belongs to the V-ATPase E subunit family. Has multiple subunits with at least A(3), B(3), C, D, E, F, H, I and proteolipid K(x).

It localises to the cell membrane. Functionally, component of the A-type ATP synthase that produces ATP from ADP in the presence of a proton gradient across the membrane. In Methanosarcina barkeri (strain Fusaro / DSM 804), this protein is A-type ATP synthase subunit E.